The sequence spans 1187 residues: Phospholipid-transporting ATPase IH (1187 aa).

Residues 1–61 (MDCSLLRTLV…SSKYTFWNFI (61 aa)) are Cytoplasmic-facing. A helical membrane pass occupies residues 62 to 82 (PKNLFEQFRRIANFYFLIIFL). The Extracellular segment spans residues 83-88 (VQLIID). A helical membrane pass occupies residues 89–110 (TPTSPVTSGLPLFFVITVTAIK). Over 111–296 (QGYEDWLRHK…SAVEKSMNTF (186 aa)) the chain is Cytoplasmic. Residues 297 to 318 (LIVYLCILVSKALINTVLKYVW) form a helical membrane-spanning segment. At 319 to 349 (QSEPFRDEPWYNEKTESERQRNLFLRAFTDF) the chain is on the extracellular side. A helical transmembrane segment spans residues 350–372 (LAFMVLFNYIIPVSMYVTVEMQK). Over 373–884 (FLGSYFITWD…GHFYYIRISE (512 aa)) the chain is Cytoplasmic. The active-site 4-aspartylphosphate intermediate is aspartate 414. ATP-binding residues include aspartate 414, lysine 415, threonine 416, glutamate 513, phenylalanine 555, lysine 578, arginine 609, threonine 689, glycine 690, and aspartate 691. Aspartate 414 contributes to the Mg(2+) binding site. Threonine 416 provides a ligand contact to Mg(2+). Serine 740 carries the phosphoserine modification. ATP contacts are provided by arginine 801 and lysine 807. Mg(2+) is bound at residue aspartate 828. 2 residues coordinate ATP: asparagine 831 and aspartate 832. Mg(2+) is bound at residue aspartate 832. A helical transmembrane segment spans residues 885–905 (LVQYFFYKNVCFIFPQFLYQF). The Extracellular segment spans residues 906 to 917 (FCGFSQQTLYDT). The helical transmembrane segment at 918–937 (AYLTLYNISFTSLPILLYSL) threads the bilayer. Residues 938-967 (MEQHVGIDVLKRDPTLYRDIAKNALLRWRV) lie on the Cytoplasmic side of the membrane. A helical transmembrane segment spans residues 968 to 989 (FIYWTFLGVFDALVFFFGAYFI). At 990-1003 (FENTTVTINGQMFG) the chain is on the extracellular side. The helical transmembrane segment at 1004–1026 (NWTFGTLVFTVMVLTVTLKLALD) threads the bilayer. At 1027-1032 (THYWTW) the chain is on the cytoplasmic side. Residues 1033–1053 (INHFVIWGSLLFYIAFSLLWG) traverse the membrane as a helical segment. Residues 1054–1071 (GVIWPFLSYQRMYYVFIS) lie on the Extracellular side of the membrane. Residues 1072 to 1096 (MLSSGPAWLGIILLVTVGLLPDVLK) form a helical membrane-spanning segment. Residues 1097–1138 (KVLCRQLWPTATERTQNIQHQDSISEFTPLASLPSWGAQGSR) are Cytoplasmic-facing. A phosphoserine mark is found at serine 1148 and serine 1158.

Belongs to the cation transport ATPase (P-type) (TC 3.A.3) family. Type IV subfamily. Component of a P4-ATPase flippase complex which consists of a catalytic alpha subunit ATP11A and an accessory beta subunit TMEM30A. It depends on Mg(2+) as a cofactor. In terms of processing, proteolytically cleaved by CASP3. As to expression, widely expressed. Expressed in myoblasts. Expressed in retina, brain, liver, testes and kidney (at protein level). Expressed in the inner ear.

Its subcellular location is the cell membrane. It localises to the early endosome. The protein localises to the recycling endosome. The protein resides in the endoplasmic reticulum membrane. The catalysed reaction is ATP + H2O + phospholipidSide 1 = ADP + phosphate + phospholipidSide 2.. The enzyme catalyses a 1,2-diacyl-sn-glycero-3-phospho-L-serine(out) + ATP + H2O = a 1,2-diacyl-sn-glycero-3-phospho-L-serine(in) + ADP + phosphate + H(+). It carries out the reaction a 1,2-diacyl-sn-glycero-3-phosphoethanolamine(out) + ATP + H2O = a 1,2-diacyl-sn-glycero-3-phosphoethanolamine(in) + ADP + phosphate + H(+). In terms of biological role, catalytic component of a P4-ATPase flippase complex which catalyzes the hydrolysis of ATP coupled to the transport of aminophospholipids, phosphatidylserines (PS) and phosphatidylethanolamines (PE), from the outer to the inner leaflet of the plasma membrane. Does not show flippase activity toward phosphatidylcholine (PC). Contributes to the maintenance of membrane lipid asymmetry with a specific role in morphogenesis of muscle cells. In myoblasts, mediates PS enrichment at the inner leaflet of plasma membrane, triggering PIEZO1-dependent Ca2+ influx and Rho GTPases signal transduction, subsequently leading to the assembly of cortical actomyosin fibers and myotube formation. In Mus musculus (Mouse), this protein is Phospholipid-transporting ATPase IH (Atp11a).